Here is a 294-residue protein sequence, read N- to C-terminus: Glycine N-acyltransferase-like protein 2 (294 aa).

An N6-acetyllysine modification is found at K19.

Belongs to the glycine N-acyltransferase family. Post-translationally, acetylation at Lys-19 drastically decreases the production of N-oleoyl and N-arachidonoyl glycines. Expressed at highest levels in salivary gland and trachea. Also detected in thyroid gland, spinal cord, prostate, lung and fetal brain.

It is found in the endoplasmic reticulum. It carries out the reaction an acyl-CoA + glycine = an N-acylglycine + CoA + H(+). The catalysed reaction is (9Z)-hexadecenoyl-CoA + glycine = N-(9Z-hexadecenoyl)-glycine + CoA + H(+). It catalyses the reaction octadecanoyl-CoA + glycine = N-octadecanoylglycine + CoA + H(+). The enzyme catalyses (5Z,8Z,11Z,14Z)-eicosatetraenoyl-CoA + glycine = N-(5Z,8Z,11Z,14Z)-eicosatetraenoyl-glycine + CoA + H(+). It carries out the reaction (9Z)-octadecenoyl-CoA + glycine = N-(9Z-octadecenoyl)glycine + CoA + H(+). The catalysed reaction is octanoyl-CoA + glycine = N-octanoylglycine + CoA + H(+). It catalyses the reaction decanoyl-CoA + glycine = N-decanoylglycine + CoA + H(+). The enzyme catalyses tetradecanoyl-CoA + glycine = N-tetradecanoylglycine + CoA + H(+). It carries out the reaction dodecanoyl-CoA + glycine = N-dodecanoylglycine + CoA + H(+). The catalysed reaction is (9Z,12Z)-octadecadienoyl-CoA + glycine = N-(9Z,12Z-octadecadienoyl)-glycine + CoA + H(+). It catalyses the reaction a fatty acyl-CoA + glycine = an N-(fatty acyl)-glycine + CoA + H(+). Its function is as follows. Mitochondrial acyltransferase which transfers the acyl group to the N-terminus of glycine. Conjugates numerous substrates, such as arachidonoyl-CoA and saturated medium and long-chain acyl-CoAs ranging from chain-length C8:0-CoA to C18:0-CoA, to form a variety of N-acylglycines. Shows a preference for monounsaturated fatty acid oleoyl-CoA (C18:1-CoA) as an acyl donor. Does not exhibit any activity toward C22:6-CoA and chenodeoxycholoyl-CoA, nor toward serine or alanine. This is Glycine N-acyltransferase-like protein 2 from Homo sapiens (Human).